We begin with the raw amino-acid sequence, 305 residues long: Sulfate adenylyltransferase subunit 2 (305 aa).

The protein belongs to the PAPS reductase family. CysD subfamily. Heterodimer composed of CysD, the smaller subunit, and CysN.

The catalysed reaction is sulfate + ATP + H(+) = adenosine 5'-phosphosulfate + diphosphate. It participates in sulfur metabolism; hydrogen sulfide biosynthesis; sulfite from sulfate: step 1/3. Its function is as follows. With CysN forms the ATP sulfurylase (ATPS) that catalyzes the adenylation of sulfate producing adenosine 5'-phosphosulfate (APS) and diphosphate, the first enzymatic step in sulfur assimilation pathway. APS synthesis involves the formation of a high-energy phosphoric-sulfuric acid anhydride bond driven by GTP hydrolysis by CysN coupled to ATP hydrolysis by CysD. The chain is Sulfate adenylyltransferase subunit 2 from Ectopseudomonas mendocina (strain ymp) (Pseudomonas mendocina).